We begin with the raw amino-acid sequence, 261 residues long: Protein phosphatase inhibitor 2 (261 aa).

The segment covering 1–16 (MNKDEEFLEEHHYKDD) has biased composition (basic and acidic residues). Residues 1–150 (MNKDEEFLEE…TPYHYYESEE (150 aa)) are required for binding to pppB. The tract at residues 1–261 (MNKDEEFLEE…LNANLSDDEQ (261 aa)) is disordered. Residues 17–60 (DAIEGEEEQGEEEESDLDDDMYNIDGETNDDDDDDEAEDEESSE) are compositionally biased toward acidic residues. Polar residues predominate over residues 123-134 (LTINDMNKSSTM). Residues 150-242 (EETDESKKYL…KKFDNLRKAH (93 aa)) are a coiled coil. The segment covering 154–163 (ESKKYLENKF) has biased composition (basic and acidic residues). The span at 195–206 (DKKKKKKNLKIH) shows a compositional bias: basic residues. Residues 212–225 (DDNDDNEDEDEDET) show a composition bias toward acidic residues. Positions 226-250 (EEKKENKKKFDNLRKAHYNEFKVVR) are enriched in basic and acidic residues.

Belongs to the protein phosphatase inhibitor 2 family. As to quaternary structure, interacts with pppB.

Its function is as follows. Inhibitor of protein-phosphatase 1 (PP1). In Dictyostelium discoideum (Social amoeba), this protein is Protein phosphatase inhibitor 2 (dpiA).